Here is a 209-residue protein sequence, read N- to C-terminus: Thiamine-phosphate synthase (209 aa).

4-amino-2-methyl-5-(diphosphooxymethyl)pyrimidine-binding positions include 32–36 (QLRMK) and Asp-64. Residues Asp-65 and Asp-84 each contribute to the Mg(2+) site. Thr-103 provides a ligand contact to 4-amino-2-methyl-5-(diphosphooxymethyl)pyrimidine. 129–131 (TTT) contacts 2-[(2R,5Z)-2-carboxy-4-methylthiazol-5(2H)-ylidene]ethyl phosphate. Lys-132 provides a ligand contact to 4-amino-2-methyl-5-(diphosphooxymethyl)pyrimidine. 2-[(2R,5Z)-2-carboxy-4-methylthiazol-5(2H)-ylidene]ethyl phosphate is bound at residue Gly-165.

Belongs to the thiamine-phosphate synthase family. Mg(2+) serves as cofactor.

It catalyses the reaction 2-[(2R,5Z)-2-carboxy-4-methylthiazol-5(2H)-ylidene]ethyl phosphate + 4-amino-2-methyl-5-(diphosphooxymethyl)pyrimidine + 2 H(+) = thiamine phosphate + CO2 + diphosphate. The catalysed reaction is 2-(2-carboxy-4-methylthiazol-5-yl)ethyl phosphate + 4-amino-2-methyl-5-(diphosphooxymethyl)pyrimidine + 2 H(+) = thiamine phosphate + CO2 + diphosphate. The enzyme catalyses 4-methyl-5-(2-phosphooxyethyl)-thiazole + 4-amino-2-methyl-5-(diphosphooxymethyl)pyrimidine + H(+) = thiamine phosphate + diphosphate. It participates in cofactor biosynthesis; thiamine diphosphate biosynthesis; thiamine phosphate from 4-amino-2-methyl-5-diphosphomethylpyrimidine and 4-methyl-5-(2-phosphoethyl)-thiazole: step 1/1. Its function is as follows. Condenses 4-methyl-5-(beta-hydroxyethyl)thiazole monophosphate (THZ-P) and 2-methyl-4-amino-5-hydroxymethyl pyrimidine pyrophosphate (HMP-PP) to form thiamine monophosphate (TMP). This is Thiamine-phosphate synthase from Bacteroides thetaiotaomicron (strain ATCC 29148 / DSM 2079 / JCM 5827 / CCUG 10774 / NCTC 10582 / VPI-5482 / E50).